The primary structure comprises 151 residues: Small ribosomal subunit protein uS15 (151 aa).

The residue at position 32 (Ser32) is a Phosphoserine. Glycyl lysine isopeptide (Lys-Gly) (interchain with G-Cter in ubiquitin) cross-links involve residues Lys39 and Lys43.

Belongs to the universal ribosomal protein uS15 family. In terms of assembly, component of the small ribosomal subunit (SSU). Mature yeast ribosomes consist of a small (40S) and a large (60S) subunit. The 40S small subunit contains 1 molecule of ribosomal RNA (18S rRNA) and 33 different proteins (encoded by 57 genes). The large 60S subunit contains 3 rRNA molecules (25S, 5.8S and 5S rRNA) and 46 different proteins (encoded by 81 genes).

The protein localises to the cytoplasm. In terms of biological role, component of the ribosome, a large ribonucleoprotein complex responsible for the synthesis of proteins in the cell. The small ribosomal subunit (SSU) binds messenger RNAs (mRNAs) and translates the encoded message by selecting cognate aminoacyl-transfer RNA (tRNA) molecules. The large subunit (LSU) contains the ribosomal catalytic site termed the peptidyl transferase center (PTC), which catalyzes the formation of peptide bonds, thereby polymerizing the amino acids delivered by tRNAs into a polypeptide chain. The nascent polypeptides leave the ribosome through a tunnel in the LSU and interact with protein factors that function in enzymatic processing, targeting, and the membrane insertion of nascent chains at the exit of the ribosomal tunnel. The polypeptide is Small ribosomal subunit protein uS15 (Saccharomyces cerevisiae (strain ATCC 204508 / S288c) (Baker's yeast)).